The following is a 179-amino-acid chain: uncharacterized protein (179 aa).

This is an uncharacterized protein from Mushroom bacilliform virus (isolate Australia/AUS LF-1) (MBV).